Consider the following 159-residue polypeptide: Small ribosomal subunit protein uS9 (159 aa).

It belongs to the universal ribosomal protein uS9 family.

This chain is Small ribosomal subunit protein uS9, found in Rickettsia conorii (strain ATCC VR-613 / Malish 7).